A 130-amino-acid polypeptide reads, in one-letter code: Small ribosomal subunit protein uS9 (130 aa).

Residues 98-130 (LKKAGMLTRDPRMKERKKYGLKKARKASQFSKR) form a disordered region. A compositionally biased stretch (basic residues) spans 111–130 (KERKKYGLKKARKASQFSKR).

Belongs to the universal ribosomal protein uS9 family.

The polypeptide is Small ribosomal subunit protein uS9 (Lacticaseibacillus casei (strain BL23) (Lactobacillus casei)).